Here is a 257-residue protein sequence, read N- to C-terminus: NAD-capped RNA hydrolase NudC (257 aa).

R69 serves as a coordination point for substrate. Zn(2+) is bound by residues C98 and C101. Position 111 (E111) interacts with substrate. C116 and C119 together coordinate Zn(2+). Residue Y124 participates in substrate binding. Residues 125–248 (PQIAPCIIVA…TVARRLIEDT (124 aa)) enclose the Nudix hydrolase domain. Positions 158, 174, and 178 each coordinate a divalent metal cation. The short motif at 159 to 180 (GFVEVGETLEQAVAREVMEESG) is the Nudix box element. Residue 192–199 (QPWPFPQS) participates in substrate binding. E219 provides a ligand contact to a divalent metal cation. Substrate is bound at residue A241.

Belongs to the Nudix hydrolase family. NudC subfamily. As to quaternary structure, homodimer. The cofactor is Mg(2+). Mn(2+) is required as a cofactor. It depends on Zn(2+) as a cofactor.

It carries out the reaction a 5'-end NAD(+)-phospho-ribonucleoside in mRNA + H2O = a 5'-end phospho-adenosine-phospho-ribonucleoside in mRNA + beta-nicotinamide D-ribonucleotide + 2 H(+). It catalyses the reaction NAD(+) + H2O = beta-nicotinamide D-ribonucleotide + AMP + 2 H(+). The enzyme catalyses NADH + H2O = reduced beta-nicotinamide D-ribonucleotide + AMP + 2 H(+). Functionally, mRNA decapping enzyme that specifically removes the nicotinamide adenine dinucleotide (NAD) cap from a subset of mRNAs by hydrolyzing the diphosphate linkage to produce nicotinamide mononucleotide (NMN) and 5' monophosphate mRNA. The NAD-cap is present at the 5'-end of some mRNAs and stabilizes RNA against 5'-processing. Has preference for mRNAs with a 5'-end purine. Catalyzes the hydrolysis of a broad range of dinucleotide pyrophosphates. This Klebsiella pneumoniae (strain 342) protein is NAD-capped RNA hydrolase NudC.